A 930-amino-acid polypeptide reads, in one-letter code: Translation initiation factor IF-2 (930 aa).

Low complexity predominate over residues 50-67 (FKPAAAPKVEAKPAAPKV). 2 disordered regions span residues 50 to 217 (FKPA…SSEE) and 260 to 346 (EVVP…HELP). 2 stretches are compositionally biased toward basic and acidic residues: residues 68–90 (SAEK…EAKP) and 110–125 (FKAE…AERR). Residues 129 to 141 (KGNNRDQQQNGNR) show a composition bias toward low complexity. Composition is skewed to basic and acidic residues over residues 157 to 167 (RDNRRFNDQAK) and 262 to 295 (VPEK…DGPR). Residues 309–318 (NQKNSNWNNN) show a composition bias toward low complexity. Residues 337–346 (VTERKFHELP) show a composition bias toward basic and acidic residues. Residues 432-599 (ERPPVVTIMG…TVLLVAEIQE (168 aa)) enclose the tr-type G domain. Residues 441 to 448 (GHVDHGKT) are G1. A GTP-binding site is contributed by 441-448 (GHVDHGKT). The interval 466–470 (GITQH) is G2. The interval 487–490 (DTPG) is G3. GTP contacts are provided by residues 487 to 491 (DTPGH) and 541 to 544 (NKID). Residues 541–544 (NKID) form a G4 region. The segment at 577-579 (SAK) is G5.

Belongs to the TRAFAC class translation factor GTPase superfamily. Classic translation factor GTPase family. IF-2 subfamily.

It localises to the cytoplasm. In terms of biological role, one of the essential components for the initiation of protein synthesis. Protects formylmethionyl-tRNA from spontaneous hydrolysis and promotes its binding to the 30S ribosomal subunits. Also involved in the hydrolysis of GTP during the formation of the 70S ribosomal complex. The polypeptide is Translation initiation factor IF-2 (Streptococcus pneumoniae (strain ATCC 700669 / Spain 23F-1)).